The primary structure comprises 389 residues: RHOMBOID-like protein 1 (389 aa).

The next 7 membrane-spanning stretches (helical) occupy residues 56–76 (PWLV…SMFI), 136–156 (IWLH…IFIG), 163–183 (FGFV…SLLS), 191–211 (ISVG…SELL), 221–241 (FAAL…GILP), 244–264 (DNFA…VFLI), and 295–315 (VLWI…LVVL). The active-site Nucleophile is the Ser196. The Charge relay system role is filled by His248.

This sequence belongs to the peptidase S54 family. Expressed in roots, seedlings, leaves, stems and flowers.

It is found in the golgi apparatus membrane. It carries out the reaction Cleaves type-1 transmembrane domains using a catalytic dyad composed of serine and histidine that are contributed by different transmembrane domains.. In terms of biological role, probable rhomboid-type serine protease that catalyzes intramembrane proteolysis. Unable to cleave the Drosophila protein Spitz. This chain is RHOMBOID-like protein 1, found in Arabidopsis thaliana (Mouse-ear cress).